A 418-amino-acid chain; its full sequence is Multidrug resistance protein MdtG (418 aa).

The next 11 helical transmembrane spans lie at 19–39, 56–76, 90–110, 113–133, 144–164, 171–191, 222–242, 251–271, 288–308, 317–337, and 376–396; these read IGCF…PLYV, LVFS…GGLA, LGMA…QFLI, ALLG…ATQI, TLST…GVLA, PVFF…LLFI, LFVT…ILTL, VANI…AALI, ILIA…FVQT, FLLG…LVYN, and AVFL…GLSL.

Belongs to the major facilitator superfamily. DHA1 family. MdtG (TC 2.A.1.2.20) subfamily.

It is found in the cell inner membrane. The polypeptide is Multidrug resistance protein MdtG (Enterobacter lignolyticus (strain SCF1)).